Consider the following 220-residue polypeptide: ATP phosphoribosyltransferase (220 aa).

Belongs to the ATP phosphoribosyltransferase family. Short subfamily. Heteromultimer composed of HisG and HisZ subunits.

It is found in the cytoplasm. The catalysed reaction is 1-(5-phospho-beta-D-ribosyl)-ATP + diphosphate = 5-phospho-alpha-D-ribose 1-diphosphate + ATP. Its pathway is amino-acid biosynthesis; L-histidine biosynthesis; L-histidine from 5-phospho-alpha-D-ribose 1-diphosphate: step 1/9. Functionally, catalyzes the condensation of ATP and 5-phosphoribose 1-diphosphate to form N'-(5'-phosphoribosyl)-ATP (PR-ATP). Has a crucial role in the pathway because the rate of histidine biosynthesis seems to be controlled primarily by regulation of HisG enzymatic activity. In Janthinobacterium sp. (strain Marseille) (Minibacterium massiliensis), this protein is ATP phosphoribosyltransferase.